We begin with the raw amino-acid sequence, 72 residues long: UPF0426 protein asl4034 (72 aa).

This sequence belongs to the UPF0426 family.

The sequence is that of UPF0426 protein asl4034 from Nostoc sp. (strain PCC 7120 / SAG 25.82 / UTEX 2576).